Consider the following 229-residue polypeptide: Large ribosomal subunit protein uL1 (229 aa).

This sequence belongs to the universal ribosomal protein uL1 family. Part of the 50S ribosomal subunit.

Binds directly to 23S rRNA. The L1 stalk is quite mobile in the ribosome, and is involved in E site tRNA release. Its function is as follows. Protein L1 is also a translational repressor protein, it controls the translation of the L11 operon by binding to its mRNA. The polypeptide is Large ribosomal subunit protein uL1 (Flavobacterium psychrophilum (strain ATCC 49511 / DSM 21280 / CIP 103535 / JIP02/86)).